We begin with the raw amino-acid sequence, 556 residues long: Mitochondrial distribution and morphology protein 34-2 (556 aa).

The region spanning 1–195 is the SMP-LTD domain; that stretch reads MAFNFNWSPL…LPAIIHRLSL (195 aa). Disordered regions lie at residues 206 to 239, 299 to 423, and 440 to 473; these read EEMN…DSLG, TDTS…PVTP, and HLPS…DATP. Polar residues predominate over residues 299-333; the sequence is TDTSEFPSSVISPLSPTLSREQSQMGSMSSLHETA. The segment covering 334-357 has biased composition (low complexity); it reads SNASMQSRPSMSSHSFSTSTYGLS. Residues 362–374 are compositionally biased toward basic residues; the sequence is RHSKAHARKRKKR. The segment covering 375–385 has biased composition (basic and acidic residues); that stretch reads VVDLRRPKTTD. A compositionally biased stretch (polar residues) spans 391 to 402; sequence SDESVMTESSRP. The span at 459–468 shows a compositional bias: basic and acidic residues; the sequence is ETIRGPKAED.

It belongs to the MDM34 family. Component of the ER-mitochondria encounter structure (ERMES) or MDM complex, composed of mmm1, mdm10, mdm12 and mdm34.

It is found in the mitochondrion outer membrane. Its function is as follows. Component of the ERMES/MDM complex, which serves as a molecular tether to connect the endoplasmic reticulum (ER) and mitochondria. Components of this complex are involved in the control of mitochondrial shape and protein biogenesis, and function in nonvesicular lipid trafficking between the ER and mitochondria. Mdm34 is required for the interaction of the ER-resident membrane protein mmm1 and the outer mitochondrial membrane-resident beta-barrel protein mdm10. In Penicillium rubens (strain ATCC 28089 / DSM 1075 / NRRL 1951 / Wisconsin 54-1255) (Penicillium chrysogenum), this protein is Mitochondrial distribution and morphology protein 34-2.